The chain runs to 65 residues: Beta-defensin 106A (65 aa).

The first 20 residues, 1–20 (MRTFLFLFVVLFFLTPAKNA), serve as a signal peptide directing secretion. 3 disulfide bridges follow: C26–C53, C33–C47, and C37–C54.

Belongs to the beta-defensin family. In terms of assembly, monomer. Interacts with CCR2 (via extracellular N-terminal region); this interaction may preferentially require specific tyrosine sulfation on CCR2.

The protein localises to the secreted. Its subcellular location is the membrane. In terms of biological role, has antibacterial activity. Acts as a ligand for C-C chemokine receptor CCR2. The chain is Beta-defensin 106A (DEFB106A) from Hylobates lar (Lar gibbon).